The following is a 929-amino-acid chain: Isoleucine--tRNA ligase (929 aa).

The short motif at 57–67 (PYANGNIHVGH) is the 'HIGH' region element. L-isoleucyl-5'-AMP is bound at residue Glu554. Positions 595-599 (KMSKS) match the 'KMSKS' region motif. Lys598 serves as a coordination point for ATP. 4 residues coordinate Zn(2+): Cys888, Cys891, Cys908, and Cys911.

This sequence belongs to the class-I aminoacyl-tRNA synthetase family. IleS type 1 subfamily. Monomer. Requires Zn(2+) as cofactor.

Its subcellular location is the cytoplasm. It catalyses the reaction tRNA(Ile) + L-isoleucine + ATP = L-isoleucyl-tRNA(Ile) + AMP + diphosphate. Its function is as follows. Catalyzes the attachment of isoleucine to tRNA(Ile). As IleRS can inadvertently accommodate and process structurally similar amino acids such as valine, to avoid such errors it has two additional distinct tRNA(Ile)-dependent editing activities. One activity is designated as 'pretransfer' editing and involves the hydrolysis of activated Val-AMP. The other activity is designated 'posttransfer' editing and involves deacylation of mischarged Val-tRNA(Ile). This Streptococcus thermophilus (strain ATCC BAA-491 / LMD-9) protein is Isoleucine--tRNA ligase.